Reading from the N-terminus, the 550-residue chain is MLSDIEITHLAKLDHISKIGAKLGLGEDDMELYGKFKAKIEPRLDGSNSKLILVTATSPTPFGEGKTTMSIGLADALNRLVKKVCLALREPSLGPVFGIKGGAAGGGYSQLAPMEDLNLHFTGDFHAITSANNLISAMIDNSLYQENPLNIDKILWKRCMDMNDRALRFITVGQGGKADGVEREDGFNITAASEIMAILCLATSLADLKERIANIMVAYNDRGEPIYVRDLGCEDAVCILLKDAMKPNLFQTIEHTPTLVHGGPFANIAHGCNSIIATKTALNLADFVITEAGFGSELGAEKFIDIKCRVAGIAPDAVVLVSTIRSLKYNGGADKESITKPNMSALEVGIANLGGHIENLKQKFGLNVVVALNKFGFDEDSEIDFVRDYCAKFGVKMAVCENFVKGGEGALELANFVLEELKKPNDMKFAYETSDDTKSKITKIATEIYGAGEVVFEEAAQKALEKIKKLGLEKLPVCIAKTQYSFSDDAKLLGRAKGFKFSVKDLQIRTGAGFIVAVCGKIMLMPGLPKTPSALNMHIDTKTGEISGLA.

Thr60–Thr67 serves as a coordination point for ATP.

This sequence belongs to the formate--tetrahydrofolate ligase family.

It carries out the reaction (6S)-5,6,7,8-tetrahydrofolate + formate + ATP = (6R)-10-formyltetrahydrofolate + ADP + phosphate. The protein operates within one-carbon metabolism; tetrahydrofolate interconversion. The chain is Formate--tetrahydrofolate ligase from Campylobacter curvus (strain 525.92).